Here is a 529-residue protein sequence, read N- to C-terminus: Lysine--tRNA ligase (529 aa).

The 'HIGH' region signature appears at Ile29–Asn37. Residues Ala274–Ser278 carry the 'KMSKS' region motif. An ATP-binding site is contributed by Lys277.

It belongs to the class-I aminoacyl-tRNA synthetase family.

Its subcellular location is the cytoplasm. The enzyme catalyses tRNA(Lys) + L-lysine + ATP = L-lysyl-tRNA(Lys) + AMP + diphosphate. In Methanosphaera stadtmanae (strain ATCC 43021 / DSM 3091 / JCM 11832 / MCB-3), this protein is Lysine--tRNA ligase.